A 359-amino-acid polypeptide reads, in one-letter code: Histidinol-phosphate aminotransferase 1 (359 aa).

N6-(pyridoxal phosphate)lysine is present on Lys-216.

It belongs to the class-II pyridoxal-phosphate-dependent aminotransferase family. Histidinol-phosphate aminotransferase subfamily. As to quaternary structure, homodimer. It depends on pyridoxal 5'-phosphate as a cofactor.

It carries out the reaction L-histidinol phosphate + 2-oxoglutarate = 3-(imidazol-4-yl)-2-oxopropyl phosphate + L-glutamate. It participates in amino-acid biosynthesis; L-histidine biosynthesis; L-histidine from 5-phospho-alpha-D-ribose 1-diphosphate: step 7/9. In Caulobacter vibrioides (strain ATCC 19089 / CIP 103742 / CB 15) (Caulobacter crescentus), this protein is Histidinol-phosphate aminotransferase 1 (hisC1).